A 430-amino-acid polypeptide reads, in one-letter code: MKQAFRVALGFLILWASVLHAEVRIEITQGVDSARPIGVVPFKWAGPGTPPEDIGKIVGADLRNSGKFNPIDVARMPQQPTTASEVTPAAWTALGIDAVVVGQVQPGADGGYLISYQLVDTSGSPGTVLAQNQYKVTKQWLRYSAHTASDEVFEKLTGIKGAFRTRIAYVVQTNGGKFPYELRVADYDGYNQFTVHRSPEPLMSPAWSPDGSKLAYVTFESGRSALVVQTLANGAIRQIASFPRHNGAPAFSPDGSRLAFALSKSGSLNLYVMNLGSGQITQITDGRSNNTEPTWFPDGQSLAYTSDQGGRPQIYKVSASGGASQRLTWEGSQNQDSEVSSDGKFLVMVSSNSGAQHIAKQDLGSGAVQVLTGTFLDETPSIAPNGTMVIYSSTQGMGSVLQLVSTDGRFKARLPATDGQVKFPAWSPYL.

The first 21 residues, Met-1–Ala-21, serve as a signal peptide directing secretion.

The protein belongs to the TolB family. In terms of assembly, the Tol-Pal system is composed of five core proteins: the inner membrane proteins TolA, TolQ and TolR, the periplasmic protein TolB and the outer membrane protein Pal. They form a network linking the inner and outer membranes and the peptidoglycan layer.

It localises to the periplasm. Its function is as follows. Part of the Tol-Pal system, which plays a role in outer membrane invagination during cell division and is important for maintaining outer membrane integrity. TolB occupies a key intermediary position in the Tol-Pal system because it communicates directly with both membrane-embedded components, Pal in the outer membrane and TolA in the inner membrane. In Serratia proteamaculans (strain 568), this protein is Tol-Pal system protein TolB.